Consider the following 336-residue polypeptide: Atypical chemokine receptor 1 (336 aa).

The Extracellular segment spans residues 1–63 (MGNCLHPAEL…CNLLDDSALP (63 aa)). 3 N-linked (GlcNAc...) asparagine glycosylation sites follow: N16, N27, and N33. Intrachain disulfides connect C51–C276 and C129–C195. Residues 64–84 (FFILVSVLGILASGIVLFMFF) form a helical membrane-spanning segment. Over 85–95 (RPLFHWQLCPG) the chain is Cytoplasmic. The chain crosses the membrane as a helical span at residues 96–116 (WPVLAQLAVGSALFSIVVPIL). Residues 117–129 (APGLGNTRSSALC) are Extracellular-facing. A helical membrane pass occupies residues 130–153 (SLGYCVWYGSAFAQALLLGCHASL). The Cytoplasmic segment spans residues 154 to 166 (GPKLGADQVPGLT). A helical transmembrane segment spans residues 167-187 (LGLSVGLWGVAALLTLPVTLA). At 188–207 (SGASGGLCTPVYSMELKALQ) the chain is on the extracellular side. A helical membrane pass occupies residues 208–228 (ATHAVACLAIFVLLPLGLFGA). The Cytoplasmic segment spans residues 229-244 (KGLKKALGMGPGPWMN). The chain crosses the membrane as a helical span at residues 245–265 (ILWAWFIFWWPHGVVLGLDFL). At 266–287 (VRSKLLLLSTCLAQQALDLLLN) the chain is on the extracellular side. A helical transmembrane segment spans residues 288-308 (LAEALAILHCVATPLLLALFC). Over 309-336 (HQATRTLLPSLPLPEGWSSHLDTLGSKS) the chain is Cytoplasmic.

The protein belongs to the G-protein coupled receptor 1 family. Atypical chemokine receptor subfamily.

Its subcellular location is the early endosome. The protein localises to the recycling endosome. The protein resides in the membrane. In terms of biological role, atypical chemokine receptor that controls chemokine levels and localization via high-affinity chemokine binding that is uncoupled from classic ligand-driven signal transduction cascades, resulting instead in chemokine sequestration, degradation, or transcytosis. Also known as interceptor (internalizing receptor) or chemokine-scavenging receptor or chemokine decoy receptor. Has a promiscuous chemokine-binding profile, interacting with inflammatory chemokines of both the CXC and the CC subfamilies but not with homeostatic chemokines. Acts as a receptor for chemokines including CCL2, CCL5, CCL7, CCL11, CCL13, CCL14, CCL17, CXCL5, CXCL6, IL8/CXCL8, CXCL11, GRO, RANTES, MCP-1 and TARC. May regulate chemokine bioavailability and, consequently, leukocyte recruitment through two distinct mechanisms: when expressed in endothelial cells, it sustains the abluminal to luminal transcytosis of tissue-derived chemokines and their subsequent presentation to circulating leukocytes; when expressed in erythrocytes, serves as blood reservoir of cognate chemokines but also as a chemokine sink, buffering potential surges in plasma chemokine levels. The sequence is that of Atypical chemokine receptor 1 (ACKR1) from Papio hamadryas (Hamadryas baboon).